A 251-amino-acid polypeptide reads, in one-letter code: CDP-diacylglycerol pyrophosphatase (251 aa).

Residues 4–24 (AGLLFLVMIVIAVVAAGIGYW) traverse the membrane as a helical segment.

It belongs to the Cdh family.

The protein localises to the cell inner membrane. The enzyme catalyses a CDP-1,2-diacyl-sn-glycerol + H2O = a 1,2-diacyl-sn-glycero-3-phosphate + CMP + 2 H(+). It functions in the pathway phospholipid metabolism; CDP-diacylglycerol degradation; phosphatidate from CDP-diacylglycerol: step 1/1. This Escherichia coli (strain K12 / MC4100 / BW2952) protein is CDP-diacylglycerol pyrophosphatase.